We begin with the raw amino-acid sequence, 321 residues long: ATP-dependent 6-phosphofructokinase (321 aa).

Gly-12 is a binding site for ATP. Residues 22–26 (RGVVR) and 55–60 (RYSVSD) contribute to the ADP site. ATP is bound by residues 73–74 (RF) and 103–106 (GDGS). Residue Asp-104 participates in Mg(2+) binding. 127 to 129 (TID) serves as a coordination point for substrate. The active-site Proton acceptor is the Asp-129. An ADP-binding site is contributed by Arg-156. Substrate-binding positions include Arg-164 and 171–173 (MGR). Residues 187 to 189 (GCE), Lys-213, and 215 to 217 (KRH) each bind ADP. Substrate is bound by residues Glu-224, Arg-245, and 251–254 (HIQR).

The protein belongs to the phosphofructokinase type A (PFKA) family. ATP-dependent PFK group I subfamily. Prokaryotic clade 'B1' sub-subfamily. Homotetramer. The cofactor is Mg(2+).

Its subcellular location is the cytoplasm. It carries out the reaction beta-D-fructose 6-phosphate + ATP = beta-D-fructose 1,6-bisphosphate + ADP + H(+). It functions in the pathway carbohydrate degradation; glycolysis; D-glyceraldehyde 3-phosphate and glycerone phosphate from D-glucose: step 3/4. Its activity is regulated as follows. Allosterically activated by ADP and other diphosphonucleosides, and allosterically inhibited by phosphoenolpyruvate. In terms of biological role, catalyzes the phosphorylation of D-fructose 6-phosphate to fructose 1,6-bisphosphate by ATP, the first committing step of glycolysis. The polypeptide is ATP-dependent 6-phosphofructokinase (Histophilus somni (strain 129Pt) (Haemophilus somnus)).